Reading from the N-terminus, the 443-residue chain is ATP-dependent protease ATPase subunit HslU (443 aa).

ATP contacts are provided by residues I18, 60–65 (GVGKTE), D256, E321, and R393.

This sequence belongs to the ClpX chaperone family. HslU subfamily. As to quaternary structure, a double ring-shaped homohexamer of HslV is capped on each side by a ring-shaped HslU homohexamer. The assembly of the HslU/HslV complex is dependent on binding of ATP.

The protein resides in the cytoplasm. Functionally, ATPase subunit of a proteasome-like degradation complex; this subunit has chaperone activity. The binding of ATP and its subsequent hydrolysis by HslU are essential for unfolding of protein substrates subsequently hydrolyzed by HslV. HslU recognizes the N-terminal part of its protein substrates and unfolds these before they are guided to HslV for hydrolysis. This is ATP-dependent protease ATPase subunit HslU from Salmonella typhi.